The primary structure comprises 450 residues: Asparagine--tRNA ligase (450 aa).

It belongs to the class-II aminoacyl-tRNA synthetase family. Homodimer.

The protein resides in the cytoplasm. The catalysed reaction is tRNA(Asn) + L-asparagine + ATP = L-asparaginyl-tRNA(Asn) + AMP + diphosphate + H(+). In Mycoplasmopsis pulmonis (strain UAB CTIP) (Mycoplasma pulmonis), this protein is Asparagine--tRNA ligase.